The following is a 163-amino-acid chain: Small ribosomal subunit protein bS18c (163 aa).

Disordered stretches follow at residues 1–54 (MYTS…PGDR) and 121–163 (ITGP…SSDC). Residues 7–48 (PFHKSKQTFHKSKQTFRKSKQTFRKFKQPFRKPKQPFRRRPR) are compositionally biased toward basic residues. Residues 140–163 (NSNRNLRNSNQTLRNNNRNLSSDC) show a composition bias toward low complexity.

It belongs to the bacterial ribosomal protein bS18 family. As to quaternary structure, part of the 30S ribosomal subunit.

It localises to the plastid. The protein resides in the chloroplast. This is Small ribosomal subunit protein bS18c from Oryza nivara (Indian wild rice).